The chain runs to 192 residues: NADH dehydrogenase [ubiquinone] iron-sulfur protein 3 (192 aa).

It belongs to the complex I 30 kDa subunit family. In terms of assembly, complex I is composed of about 45 different subunits. This is a component of the iron-sulfur (IP) fragment of the enzyme.

It localises to the mitochondrion inner membrane. It catalyses the reaction a ubiquinone + NADH + 5 H(+)(in) = a ubiquinol + NAD(+) + 4 H(+)(out). Its function is as follows. Core subunit of the mitochondrial membrane respiratory chain NADH dehydrogenase (Complex I) that is believed to belong to the minimal assembly required for catalysis. Complex I functions in the transfer of electrons from NADH to the respiratory chain. The immediate electron acceptor for the enzyme is believed to be ubiquinone. The protein is NADH dehydrogenase [ubiquinone] iron-sulfur protein 3 (NAD9) of Patellifolia webbiana (Patellaria webbiana).